The following is a 465-amino-acid chain: VGFKAGVKDYKLTYYTPDYVTKDTDILAAFRVTPQPGVPPEEAGAAVAAESSTGTWTTVWTDGLTSLDRYKGRCYNIEPVAGEENQYICYVAYPLDLFEEGSVTNMFTSIVGNVFGFKALRALRLEDLRIPPAYSKTFQGPPHGIQVERDKLNKYGRPLLGCTIKPKLGLSAKNYGRAVYECLRGGLDFTKDDENVNSQPFMRWRDRFLFCAEAIFKSQAETGEIKGHYLNATAGTCEEMIKRAVFARELGAPIVMHDYLTGGFTANTSLAHYCRDNGLLLHIHRAMHAVIDRQKNHGMHFRVLAKALRLSGGDHIHAGTVVGKLEGERDITLGFVDLLRDDFVEKDRSRGIYFTQDWVSLPGVLPVASGGIHVWHMPALTEIFGDDSVLQFGGGTLGHPWGNAPGAVANRVALEACVQARNEGRDLAREGNDIIRDASKWSPELAAACEVWKEIKFEFEAMDTL.

Lys-4 is subject to N6,N6,N6-trimethyllysine. Asn-113 and Thr-163 together coordinate substrate. Catalysis depends on Lys-165, which acts as the Proton acceptor. Position 167 (Lys-167) interacts with substrate. Mg(2+) contacts are provided by Lys-191, Asp-193, and Glu-194. An N6-carboxylysine modification is found at Lys-191. The Proton acceptor role is filled by His-284. Residues Arg-285, His-317, and Ser-369 each coordinate substrate.

This sequence belongs to the RuBisCO large chain family. Type I subfamily. In terms of assembly, heterohexadecamer of 8 large chains and 8 small chains; disulfide-linked. The disulfide link is formed within the large subunit homodimers. Requires Mg(2+) as cofactor. In terms of processing, the disulfide bond which can form in the large chain dimeric partners within the hexadecamer appears to be associated with oxidative stress and protein turnover.

It is found in the plastid. It localises to the chloroplast. It carries out the reaction 2 (2R)-3-phosphoglycerate + 2 H(+) = D-ribulose 1,5-bisphosphate + CO2 + H2O. The catalysed reaction is D-ribulose 1,5-bisphosphate + O2 = 2-phosphoglycolate + (2R)-3-phosphoglycerate + 2 H(+). In terms of biological role, ruBisCO catalyzes two reactions: the carboxylation of D-ribulose 1,5-bisphosphate, the primary event in carbon dioxide fixation, as well as the oxidative fragmentation of the pentose substrate in the photorespiration process. Both reactions occur simultaneously and in competition at the same active site. The chain is Ribulose bisphosphate carboxylase large chain from Bursera inaguensis (Elaphrium inaguense).